Consider the following 430-residue polypeptide: Adenylosuccinate synthetase (430 aa).

GTP-binding positions include Gly-12–Lys-18 and Gly-40–Thr-42. The active-site Proton acceptor is the Asp-13. Mg(2+)-binding residues include Asp-13 and Gly-40. IMP contacts are provided by residues Asp-13–Lys-16, Asn-38–His-41, Thr-128, Arg-142, Gln-223, Thr-238, and Arg-302. The active-site Proton donor is His-41. Thr-298–Arg-304 lines the substrate pocket. Residues Arg-304, Leu-330 to Asp-332, and Ser-412 to Gly-414 contribute to the GTP site.

This sequence belongs to the adenylosuccinate synthetase family. Homodimer. It depends on Mg(2+) as a cofactor.

Its subcellular location is the cytoplasm. It carries out the reaction IMP + L-aspartate + GTP = N(6)-(1,2-dicarboxyethyl)-AMP + GDP + phosphate + 2 H(+). Its pathway is purine metabolism; AMP biosynthesis via de novo pathway; AMP from IMP: step 1/2. Its function is as follows. Plays an important role in the de novo pathway of purine nucleotide biosynthesis. Catalyzes the first committed step in the biosynthesis of AMP from IMP. The protein is Adenylosuccinate synthetase of Listeria monocytogenes serovar 1/2a (strain ATCC BAA-679 / EGD-e).